We begin with the raw amino-acid sequence, 205 residues long: Recombination protein RecR (205 aa).

The C4-type zinc-finger motif lies at 59–74; sequence CSVCFHLSAEPVCEVC. Positions 82 to 181 constitute a Toprim domain; the sequence is GTLCVVADSR…KVTRIAFGLP (100 aa).

Belongs to the RecR family.

Functionally, may play a role in DNA repair. It seems to be involved in an RecBC-independent recombinational process of DNA repair. It may act with RecF and RecO. This Cyanothece sp. (strain PCC 7425 / ATCC 29141) protein is Recombination protein RecR.